We begin with the raw amino-acid sequence, 311 residues long: GTP cyclohydrolase FolE2 (311 aa).

It belongs to the GTP cyclohydrolase IV family.

It catalyses the reaction GTP + H2O = 7,8-dihydroneopterin 3'-triphosphate + formate + H(+). The protein operates within cofactor biosynthesis; 7,8-dihydroneopterin triphosphate biosynthesis; 7,8-dihydroneopterin triphosphate from GTP: step 1/1. Converts GTP to 7,8-dihydroneopterin triphosphate. This chain is GTP cyclohydrolase FolE2, found in Hydrogenovibrio crunogenus (strain DSM 25203 / XCL-2) (Thiomicrospira crunogena).